Reading from the N-terminus, the 102-residue chain is Large ribosomal subunit protein bL21 (102 aa).

This sequence belongs to the bacterial ribosomal protein bL21 family. In terms of assembly, part of the 50S ribosomal subunit. Contacts protein L20.

In terms of biological role, this protein binds to 23S rRNA in the presence of protein L20. This is Large ribosomal subunit protein bL21 from Leptospira biflexa serovar Patoc (strain Patoc 1 / Ames).